Reading from the N-terminus, the 397-residue chain is uncharacterized protein (397 aa).

4 helical membrane-spanning segments follow: residues tryptophan 142–alanine 162, serine 191–leucine 211, alanine 242–leucine 258, and alanine 260–phenylalanine 280.

The protein belongs to the cation diffusion facilitator (CDF) transporter (TC 2.A.4) family. SLC30A subfamily.

Its subcellular location is the membrane. This is an uncharacterized protein from Schizosaccharomyces pombe (strain 972 / ATCC 24843) (Fission yeast).